A 408-amino-acid chain; its full sequence is Histone acetyltransferase type B subunit 2 (408 aa).

WD repeat units lie at residues lysine 120 to glycine 160, tyrosine 167 to proline 207, valine 213 to lysine 253, serine 255 to histidine 295, and glycine 299 to glutamine 339. Positions aspartate 341 to aspartate 345 are interaction with the histone H4 N-terminus. One copy of the WD 6 repeat lies at glycine 356–proline 396.

The protein belongs to the WD repeat RBAP46/RBAP48/MSI1 family. In terms of assembly, component of the HAT-B complex composed of at least HAT1 and HAT2. The HAT-B complex binds to histone H4 tail.

It localises to the cytoplasm. The protein resides in the nucleus. Regulatory subunit of the histone acetylase B (HAT-B) complex. The complex acetylates 'Lys-12' of histone H4 which is required for telomeric silencing. The sequence is that of Histone acetyltransferase type B subunit 2 (HAT2) from Kluyveromyces lactis (strain ATCC 8585 / CBS 2359 / DSM 70799 / NBRC 1267 / NRRL Y-1140 / WM37) (Yeast).